The following is a 129-amino-acid chain: Small ribosomal subunit protein uS11 (129 aa).

Belongs to the universal ribosomal protein uS11 family. Part of the 30S ribosomal subunit. Interacts with proteins S7 and S18. Binds to IF-3.

In terms of biological role, located on the platform of the 30S subunit, it bridges several disparate RNA helices of the 16S rRNA. Forms part of the Shine-Dalgarno cleft in the 70S ribosome. This chain is Small ribosomal subunit protein uS11, found in Cereibacter sphaeroides (strain ATCC 17029 / ATH 2.4.9) (Rhodobacter sphaeroides).